Consider the following 84-residue polypeptide: Small ribosomal subunit protein bS16 (84 aa).

Belongs to the bacterial ribosomal protein bS16 family.

The sequence is that of Small ribosomal subunit protein bS16 from Dichelobacter nodosus (strain VCS1703A).